A 274-amino-acid chain; its full sequence is Sulfur carrier protein FdhD (274 aa).

The active-site Cysteine persulfide intermediate is C121. 258-263 (FSKPGR) is a binding site for Mo-bis(molybdopterin guanine dinucleotide).

This sequence belongs to the FdhD family.

It localises to the cytoplasm. Functionally, required for formate dehydrogenase (FDH) activity. Acts as a sulfur carrier protein that transfers sulfur from IscS to the molybdenum cofactor prior to its insertion into FDH. This Yersinia pestis bv. Antiqua (strain Antiqua) protein is Sulfur carrier protein FdhD.